The primary structure comprises 803 residues: Xylosyltransferase sqv-6 (803 aa).

The Cytoplasmic portion of the chain corresponds to 3–13 (VVGGVNTNYRH). Residues 14–34 (YALVIVLFFFLNVYLLYSAQN) traverse the membrane as a helical; Signal-anchor for type II membrane protein segment. Residues 35 to 803 (SVQIRKDEGE…GWDEEARILR (769 aa)) are Lumenal-facing. The cysteines at positions 63 and 91 are disulfide-linked. 3 N-linked (GlcNAc...) asparagine glycosylation sites follow: Asn95, Asn175, and Asn224. 3 disulfides stabilise this stretch: Cys107-Cys446, Cys465-Cys479, and Cys467-Cys477. The 95-residue stretch at 115-209 (IDQRIGCFLD…FNAVEIFRTD (95 aa)) folds into the WSC domain. UDP-alpha-D-xylose is bound by residues Asp265 and 294 to 296 (TIW). Asn326 carries N-linked (GlcNAc...) asparagine glycosylation. 399-400 (DW) is a UDP-alpha-D-xylose binding site. Residues Ser480 and 506 to 507 (RK) contribute to the UDP-alpha-D-xylose site. Asn615 and Asn718 each carry an N-linked (GlcNAc...) asparagine glycan. A disulfide bridge connects residues Cys769 and Cys775.

Belongs to the glycosyltransferase 14 family. XylT subfamily. A divalent metal cation is required as a cofactor.

It localises to the endoplasmic reticulum membrane. It is found in the golgi apparatus membrane. The catalysed reaction is UDP-alpha-D-xylose + L-seryl-[protein] = 3-O-(beta-D-xylosyl)-L-seryl-[protein] + UDP + H(+). The protein operates within glycan metabolism; chondroitin sulfate biosynthesis. It participates in glycan metabolism; heparan sulfate biosynthesis. Functionally, catalyzes the first step in biosynthesis of glycosaminoglycan. Transfers D-xylose from UDP-D-xylose to specific serine residues of the core protein. The polypeptide is Xylosyltransferase sqv-6 (Caenorhabditis briggsae).